The chain runs to 232 residues: DNA repair and recombination protein RadB (232 aa).

It belongs to the eukaryotic RecA-like protein family. RadB subfamily.

Involved in DNA repair and in homologous recombination. May regulate the cleavage reactions of the branch-structured DNA. Has a very weak ATPase activity that is not stimulated by DNA. Binds DNA but does not promote DNA strands exchange. This chain is DNA repair and recombination protein RadB, found in Methanosphaera stadtmanae (strain ATCC 43021 / DSM 3091 / JCM 11832 / MCB-3).